We begin with the raw amino-acid sequence, 276 residues long: NH(3)-dependent NAD(+) synthetase (276 aa).

Residue 43-50 (GISGGVDS) coordinates ATP. Aspartate 49 serves as a coordination point for Mg(2+). A deamido-NAD(+)-binding site is contributed by arginine 146. Threonine 166 is an ATP binding site. A Mg(2+)-binding site is contributed by glutamate 171. Deamido-NAD(+) is bound by residues lysine 179 and aspartate 186. Positions 195 and 217 each coordinate ATP. 266–267 (HK) lines the deamido-NAD(+) pocket.

This sequence belongs to the NAD synthetase family. As to quaternary structure, homodimer.

The catalysed reaction is deamido-NAD(+) + NH4(+) + ATP = AMP + diphosphate + NAD(+) + H(+). It functions in the pathway cofactor biosynthesis; NAD(+) biosynthesis; NAD(+) from deamido-NAD(+) (ammonia route): step 1/1. Catalyzes the ATP-dependent amidation of deamido-NAD to form NAD. Uses ammonia as a nitrogen source. The sequence is that of NH(3)-dependent NAD(+) synthetase from Shewanella sediminis (strain HAW-EB3).